The chain runs to 358 residues: Magnesium-protoporphyrin IX monomethyl ester [oxidative] cyclase 2 (358 aa).

Belongs to the AcsF family. Fe cation is required as a cofactor.

It carries out the reaction Mg-protoporphyrin IX 13-monomethyl ester + 3 NADPH + 3 O2 + 2 H(+) = 3,8-divinyl protochlorophyllide a + 3 NADP(+) + 5 H2O. The protein operates within porphyrin-containing compound metabolism; chlorophyll biosynthesis (light-independent). In terms of biological role, catalyzes the formation of the isocyclic ring in chlorophyll biosynthesis. Mediates the cyclase reaction, which results in the formation of divinylprotochlorophyllide (Pchlide) characteristic of all chlorophylls from magnesium-protoporphyrin IX 13-monomethyl ester (MgPMME). This Nostoc sp. (strain PCC 7120 / SAG 25.82 / UTEX 2576) protein is Magnesium-protoporphyrin IX monomethyl ester [oxidative] cyclase 2.